Consider the following 808-residue polypeptide: MAWSQLEVTKAHVAYSCVGIFSSIFSLVSLFVKEQLYIGESMVASIFGLIVGPHCLNWFNPLSWGNTDSITLEISRILLCLQVFAVSVELPRKYMLKHWVSVTMLLVPVMTSGWLVIALFVWILVPGLNFPASLLMGACITATDPVLAQSVVSGTFAQKVPGHLRNLLSCESGCNDGLAIPFVFLSLDLLLYPGRGGQIVKDWICVTILWECIFGSILGCIIGYCGRKAIRFAEGRHIIDRESFLAFYLILALTCAGFGSMLGVDDLLVSFFAGTAFAWDGWFAAKTHESNVSNVIDVLLNYAYFVYLGSILPWKDFNNPDIGLDVWRLILLSLVVIFLRRIPAVLSLKPLIPDIKSWREAMFIGHFGPIGVGAVFAAITSKSQLESHLTNEETPLKDTPGRGSKHWQVMACIWPITCFSIMTSVIVHGSSVAVIMLGRYLSTVTLMALPTGRTTNTKNAWLERLPALDKSGRPFSLQRLDKEPSLSPGQIGGRTSGMVATPKLGMRQRWRQKLQDNKEIEPDIEMNNFCQGTFQIRKETHASTNDSHGTTTANLGTSNGRAQGLPWRSKMNIIDRAEAVNTIYGLDKLAEDTENKDVWRVNTSRIPGIRSPYDDVYTYQSDSSSIGSIERQRIKSLREQEQQAYIAYTEDDQVIIENRQGEILEYVKFHKEGLGDAESGLHNHDRPKRAISPPLEKLHQITNEARKNKYYAYKVGNDLVIEDESGEVFRRYRISPHGGKRKIKKIINPVSSVLSSVGITKPRGVSERINHYLLHSEDEMADDEAESENDMDYEDSDGPASRFKDHAD.

The next 9 helical transmembrane spans lie at 12–32, 36–56, 70–90, 105–125, 128–148, 174–194, 203–223, 244–264, and 267–287; these read HVAY…SLFV, LYIG…PHCL, ITLE…SVEL, LLVP…WILV, LNFP…PVLA, CNDG…LYPG, WICV…CIIG, FLAF…MLGV, and LLVS…AAKT. N-linked (GlcNAc...) asparagine glycosylation occurs at Asn291. Helical transmembrane passes span 294–314, 319–339, 361–381, 409–429, and 432–452; these read NVID…ILPW, NPDI…VIFL, AMFI…AITS, VMAC…IVHG, and VAVI…LPTG. Disordered regions lie at residues 478–499 and 541–562; these read QRLD…SGMV and HAST…NGRA. Over residues 542–561 the composition is skewed to polar residues; sequence ASTNDSHGTTTANLGTSNGR. 2 N-linked (GlcNAc...) asparagine glycosylation sites follow: Asn545 and Asn602. The segment at 774-808 is disordered; it reads LHSEDEMADDEAESENDMDYEDSDGPASRFKDHAD. Residues 779-797 are compositionally biased toward acidic residues; sequence EMADDEAESENDMDYEDSD.

It belongs to the fungal Na(+)/H(+) exchanger family.

Its subcellular location is the membrane. Its function is as follows. Sodium export from cell, takes up external protons in exchange for internal sodium ions. Seems to be poorly expressed. The protein is Na(+)/H(+) antiporter 2 (SOD22) of Zygosaccharomyces rouxii.